We begin with the raw amino-acid sequence, 450 residues long: Glucose-6-phosphate isomerase (450 aa).

The residue at position 39 (threonine 39) is a Phosphothreonine. The Proton donor role is filled by glutamate 291. Active-site residues include histidine 312 and lysine 426.

Belongs to the GPI family.

It is found in the cytoplasm. It catalyses the reaction alpha-D-glucose 6-phosphate = beta-D-fructose 6-phosphate. Its pathway is carbohydrate biosynthesis; gluconeogenesis. It functions in the pathway carbohydrate degradation; glycolysis; D-glyceraldehyde 3-phosphate and glycerone phosphate from D-glucose: step 2/4. Catalyzes the reversible isomerization of glucose-6-phosphate to fructose-6-phosphate. The chain is Glucose-6-phosphate isomerase from Bacillus anthracis.